The chain runs to 262 residues: Diaminopimelate epimerase (262 aa).

3 residues coordinate substrate: Asn-17, Gln-45, and Asn-63. The Proton donor role is filled by Cys-72. Substrate contacts are provided by residues 73–74, Asn-154, Asn-187, and 205–206; these read GN and ER. Cys-214 (proton acceptor) is an active-site residue. 215-216 contacts substrate; that stretch reads GS.

The protein belongs to the diaminopimelate epimerase family. As to quaternary structure, homodimer.

The protein localises to the cytoplasm. The catalysed reaction is (2S,6S)-2,6-diaminopimelate = meso-2,6-diaminopimelate. The protein operates within amino-acid biosynthesis; L-lysine biosynthesis via DAP pathway; DL-2,6-diaminopimelate from LL-2,6-diaminopimelate: step 1/1. Functionally, catalyzes the stereoinversion of LL-2,6-diaminopimelate (L,L-DAP) to meso-diaminopimelate (meso-DAP), a precursor of L-lysine and an essential component of the bacterial peptidoglycan. The chain is Diaminopimelate epimerase from Wolbachia sp. subsp. Drosophila simulans (strain wRi).